Consider the following 378-residue polypeptide: Odorant receptor 33a (378 aa).

Residues 1-33 (MDSRRKVRSENLYKTYWLYWRLLGVEGDYPFRR) are Cytoplasmic-facing. The helical transmembrane segment at 34-54 (LVDFTITSFITILFPVHLILG) threads the bilayer. The Extracellular segment spans residues 55–62 (MYKKPQIQ). A helical transmembrane segment spans residues 63–83 (VFRSLHFTSECLFCSYKFFCF). The Cytoplasmic portion of the chain corresponds to 84–127 (RWKLKEIKTIEGLLQDLDSRVESEEERNYFNQNPSRVARMLSKS). A helical transmembrane segment spans residues 128 to 148 (YLVAAISAIITATVAGLFSTG). Over 149-163 (RNLMYLGWFPYDFQA) the chain is Extracellular. The chain crosses the membrane as a helical span at residues 164–184 (TAAIYWISFSYQAIGSSLLIL). The Cytoplasmic segment spans residues 185–254 (ENLANDSYPP…LLRSTLHLSQ (70 aa)). A helical transmembrane segment spans residues 255–275 (LGQFLSSGINISITLINILFF). Over 276–285 (AENNFAMLYY) the chain is Extracellular. Residues 286-306 (AVFFAAMLIELFPSCYYGILM) traverse the membrane as a helical segment. Topologically, residues 307–355 (TMEFDKLPYAIFSSNWLKMDKRYNRSLIILMQLTLVPVNIKAGGIVGID) are cytoplasmic. Residues 356–376 (MSAFFATVRMAYSFYTLALSF) form a helical membrane-spanning segment. At 377–378 (RV) the chain is on the extracellular side.

Belongs to the insect chemoreceptor superfamily. Heteromeric odorant receptor channel (TC 1.A.69) family. Or2a subfamily. In terms of assembly, interacts with Orco. Complexes exist early in the endomembrane system in olfactory sensory neurons (OSNs), coupling these complexes to the conserved ciliary trafficking pathway. Expressed in 1-2 cells on the distal edge of the antenna but not the maxillary palp.

Its subcellular location is the cell membrane. Functionally, odorant receptor which mediates acceptance or avoidance behavior, depending on its substrates. The odorant receptor repertoire encodes a large collection of odor stimuli that vary widely in identity, intensity, and duration. May form a complex with Orco to form odorant-sensing units, providing sensitive and prolonged odorant signaling and calcium permeability. This is Odorant receptor 33a (Or33a) from Drosophila melanogaster (Fruit fly).